The following is a 387-amino-acid chain: 3-ketoacyl-CoA thiolase (387 aa).

C91 serves as the catalytic Acyl-thioester intermediate. Residues H343 and C373 each act as proton acceptor in the active site.

This sequence belongs to the thiolase-like superfamily. Thiolase family. In terms of assembly, heterotetramer of two alpha chains (FadB) and two beta chains (FadA).

The protein resides in the cytoplasm. It catalyses the reaction an acyl-CoA + acetyl-CoA = a 3-oxoacyl-CoA + CoA. The protein operates within lipid metabolism; fatty acid beta-oxidation. Catalyzes the final step of fatty acid oxidation in which acetyl-CoA is released and the CoA ester of a fatty acid two carbons shorter is formed. The chain is 3-ketoacyl-CoA thiolase from Idiomarina loihiensis (strain ATCC BAA-735 / DSM 15497 / L2-TR).